We begin with the raw amino-acid sequence, 85 residues long: Small ribosomal subunit protein bS18 (85 aa).

The protein belongs to the bacterial ribosomal protein bS18 family. In terms of assembly, part of the 30S ribosomal subunit. Forms a tight heterodimer with protein bS6.

In terms of biological role, binds as a heterodimer with protein bS6 to the central domain of the 16S rRNA, where it helps stabilize the platform of the 30S subunit. The sequence is that of Small ribosomal subunit protein bS18 from Hyphomonas neptunium (strain ATCC 15444).